A 401-amino-acid polypeptide reads, in one-letter code: LL-diaminopimelate aminotransferase (401 aa).

Substrate-binding residues include Tyr15 and Gly42. Residues Tyr72, Ala108–Lys109, Tyr132, Asn176, Tyr207, and Ser235–Ser237 contribute to the pyridoxal 5'-phosphate site. Lys109, Tyr132, and Asn176 together coordinate substrate. An N6-(pyridoxal phosphate)lysine modification is found at Lys238. Pyridoxal 5'-phosphate is bound by residues Arg246 and Asn281. Positions 281 and 377 each coordinate substrate.

This sequence belongs to the class-I pyridoxal-phosphate-dependent aminotransferase family. LL-diaminopimelate aminotransferase subfamily. Homodimer. Pyridoxal 5'-phosphate is required as a cofactor.

It catalyses the reaction (2S,6S)-2,6-diaminopimelate + 2-oxoglutarate = (S)-2,3,4,5-tetrahydrodipicolinate + L-glutamate + H2O + H(+). It functions in the pathway amino-acid biosynthesis; L-lysine biosynthesis via DAP pathway; LL-2,6-diaminopimelate from (S)-tetrahydrodipicolinate (aminotransferase route): step 1/1. Involved in the synthesis of meso-diaminopimelate (m-DAP or DL-DAP), required for both lysine and peptidoglycan biosynthesis. Catalyzes the direct conversion of tetrahydrodipicolinate to LL-diaminopimelate. This Azobacteroides pseudotrichonymphae genomovar. CFP2 protein is LL-diaminopimelate aminotransferase.